The sequence spans 1030 residues: Beta-galactosidase (1030 aa).

Asn99 and Asp197 together coordinate substrate. Asp197 contributes to the Na(+) binding site. 3 residues coordinate Mg(2+): Glu411, His413, and Glu456. Residues Glu456 and 532–535 (EYAH) contribute to the substrate site. The active-site Proton donor is Glu456. The active-site Nucleophile is the Glu532. Asn592 lines the Mg(2+) pocket. Positions 596 and 599 each coordinate Na(+). Positions 599 and 1004 each coordinate substrate.

The protein belongs to the glycosyl hydrolase 2 family. In terms of assembly, homotetramer. Requires Mg(2+) as cofactor. It depends on Na(+) as a cofactor.

It carries out the reaction Hydrolysis of terminal non-reducing beta-D-galactose residues in beta-D-galactosides.. This Photobacterium profundum (strain SS9) protein is Beta-galactosidase.